The primary structure comprises 341 residues: Heat-inducible transcription repressor HrcA (341 aa).

It belongs to the HrcA family.

Functionally, negative regulator of class I heat shock genes (grpE-dnaK-dnaJ and groELS operons). Prevents heat-shock induction of these operons. The chain is Heat-inducible transcription repressor HrcA from Corynebacterium glutamicum (strain ATCC 13032 / DSM 20300 / JCM 1318 / BCRC 11384 / CCUG 27702 / LMG 3730 / NBRC 12168 / NCIMB 10025 / NRRL B-2784 / 534).